The sequence spans 111 residues: Fluoride-specific ion channel FluC (111 aa).

The next 3 helical transmembrane spans lie at 2–22, 36–56, and 71–91; these read GLLL…RFAL, GILL…AFLI, and FLLV…SLDI. Positions 79 and 82 each coordinate Na(+).

Belongs to the fluoride channel Fluc/FEX (TC 1.A.43) family.

It localises to the cell inner membrane. It carries out the reaction fluoride(in) = fluoride(out). Its activity is regulated as follows. Na(+) is not transported, but it plays an essential structural role and its presence is essential for fluoride channel function. Fluoride-specific ion channel. Important for reducing fluoride concentration in the cell, thus reducing its toxicity. This chain is Fluoride-specific ion channel FluC, found in Francisella tularensis subsp. holarctica (strain FTNF002-00 / FTA).